The following is a 160-amino-acid chain: SsrA-binding protein (160 aa).

It belongs to the SmpB family.

The protein resides in the cytoplasm. Required for rescue of stalled ribosomes mediated by trans-translation. Binds to transfer-messenger RNA (tmRNA), required for stable association of tmRNA with ribosomes. tmRNA and SmpB together mimic tRNA shape, replacing the anticodon stem-loop with SmpB. tmRNA is encoded by the ssrA gene; the 2 termini fold to resemble tRNA(Ala) and it encodes a 'tag peptide', a short internal open reading frame. During trans-translation Ala-aminoacylated tmRNA acts like a tRNA, entering the A-site of stalled ribosomes, displacing the stalled mRNA. The ribosome then switches to translate the ORF on the tmRNA; the nascent peptide is terminated with the 'tag peptide' encoded by the tmRNA and targeted for degradation. The ribosome is freed to recommence translation, which seems to be the essential function of trans-translation. In Histophilus somni (strain 129Pt) (Haemophilus somnus), this protein is SsrA-binding protein.